The primary structure comprises 561 residues: Carbohydrate sulfotransferase 15 (561 aa).

Over 1-80 (MRHCINCCIQ…FLRFRKGKRC (80 aa)) the chain is Cytoplasmic. Residues 81-101 (SLVFGLIIMTLVMASYILSGA) form a helical; Signal-anchor for type II membrane protein membrane-spanning segment. Over 102–561 (HQELLISSPF…DDEAFAWKTT (460 aa)) the chain is Lumenal. 263–267 (KCGTT) is a 3'-phosphoadenylyl sulfate binding site. Asn-364 carries N-linked (GlcNAc...) asparagine glycosylation. 2 residues coordinate 3'-phosphoadenylyl sulfate: Arg-392 and Ser-400.

It belongs to the sulfotransferase 1 family. In terms of assembly, homodimer; disulfide-linked (Potential). The relevance of homodimerization is however unsure. May interact with phosphorylated proteins in resting B-cells, including HCK. A divalent metal cation serves as cofactor. The cofactor is glutathione. Glycosylated.

It is found in the golgi apparatus membrane. It catalyses the reaction dermatan 4'-sulfate + n 3'-phosphoadenylyl sulfate = dermatan 4',6'-bissulfate + n adenosine 3',5'-bisphosphate + n H(+). The catalysed reaction is chondroitin 4'-sulfate + n 3'-phosphoadenylyl sulfate = chondroitin 4',6'-bissulfate + n adenosine 3',5'-bisphosphate + n H(+). With respect to regulation, inhibited by phenyl beta-GalNAc(4,6-SO(4)). Functionally, sulfotransferase that transfers sulfate from 3'-phosphoadenosine 5'-phosphosulfate (PAPS) to the C-6 hydroxyl group of the GalNAc 4-sulfate residue of chondroitin sulfate A and forms chondroitin sulfate E containing GlcA-GalNAc(4,6-SO(4)) repeating units. It also transfers sulfate to a unique non-reducing terminal sequence, GalNAc(4SO4)-GlcA(2SO4)-GalNAc(6SO4), to yield a highly sulfated structure similar to the structure found in thrombomodulin chondroitin sulfate. May also act as a B-cell receptor involved in BCR ligation-mediated early activation that mediate regulatory signals key to B-cell development and/or regulation of B-cell-specific RAG expression; however such results are unclear in vivo. The chain is Carbohydrate sulfotransferase 15 (Chst15) from Rattus norvegicus (Rat).